A 465-amino-acid polypeptide reads, in one-letter code: Transposase for insertion sequence IS1202 (465 aa).

The 184-residue stretch at 157–340 (HPSRPRKKFA…APNPSERNLI (184 aa)) folds into the Integrase catalytic domain.

Functionally, required for the transposition of the insertion element. The sequence is that of Transposase for insertion sequence IS1202 from Streptococcus pneumoniae.